Reading from the N-terminus, the 131-residue chain is UPF0102 protein RALTA_A3032 (131 aa).

Residues 1 to 12 (MMRSFKSTQEPS) show a composition bias toward polar residues. The tract at residues 1–21 (MMRSFKSTQEPSRQARGAQAE) is disordered.

This sequence belongs to the UPF0102 family.

The protein is UPF0102 protein RALTA_A3032 of Cupriavidus taiwanensis (strain DSM 17343 / BCRC 17206 / CCUG 44338 / CIP 107171 / LMG 19424 / R1) (Ralstonia taiwanensis (strain LMG 19424)).